We begin with the raw amino-acid sequence, 187 residues long: MVSTTTFLMLTSLATLTSARSHLTVTIGSNCTLKGPQGGHVFWWRIYDNGWFTKPCDQPGRFFCNGRDLTIINVTANDKGFYYGTDYKSSLDYNIIVLPSTTPAPRTTTFSSSSVANNTISNPTFAALLKRTVNNSTTSHTTISTSTISIIAAVTIGISILVFTITYYACCYRKDKHKGDPLLRFDI.

Residues asparagine 30, asparagine 73, asparagine 117, asparagine 134, and asparagine 135 are each glycosylated (N-linked (GlcNAc...) asparagine; by host).

It belongs to the adenoviridae E3_20 family.

This Human adenovirus B serotype 11 (strain Slobiski) (HAdV-11) protein is Early E3 20.6 kDa glycoprotein.